The sequence spans 310 residues: 26S proteasome non-ATPase regulatory subunit 14 (310 aa).

Residues 31–166 (VYISSLALLK…IDAFRLINAN (136 aa)) enclose the MPN domain. Residues His113, His115, and Asp126 each coordinate Zn(2+). A JAMM motif motif is present at residues 113–126 (HSHPGFGCWLSGVD). A phosphoserine mark is found at Ser150 and Ser224. Position 266 is a phosphothreonine (Thr266).

Belongs to the peptidase M67A family. PSMD14 subfamily. As to quaternary structure, component of the 19S proteasome regulatory particle complex. The 26S proteasome consists of a 20S core particle (CP) and two 19S regulatory subunits (RP). The regulatory particle is made of a lid composed of 9 subunits including PSMD4, a base containing 6 ATPases and few additional components. Within the complex, PSMD4 interacts with subunit PSMD7 through their respective MPN domain. Interacts with TXNL1. Widely expressed. Highest levels in heart and skeletal muscle.

Its function is as follows. Component of the 26S proteasome, a multiprotein complex involved in the ATP-dependent degradation of ubiquitinated proteins. This complex plays a key role in the maintenance of protein homeostasis by removing misfolded or damaged proteins, which could impair cellular functions, and by removing proteins whose functions are no longer required. Therefore, the proteasome participates in numerous cellular processes, including cell cycle progression, apoptosis, or DNA damage repair. The PSMD14 subunit is a metalloprotease that specifically cleaves 'Lys-63'-linked polyubiquitin chains within the complex. Plays a role in response to double-strand breaks (DSBs): acts as a regulator of non-homologous end joining (NHEJ) by cleaving 'Lys-63'-linked polyubiquitin, thereby promoting retention of JMJD2A/KDM4A on chromatin and restricting TP53BP1 accumulation. Also involved in homologous recombination repair by promoting RAD51 loading. This Homo sapiens (Human) protein is 26S proteasome non-ATPase regulatory subunit 14 (PSMD14).